The sequence spans 173 residues: Macro domain-containing protein in gbd 3'region (173 aa).

In terms of domain architecture, Macro spans 1–173; it reads MSGEHLQVVH…NYRLYRERLS (173 aa).

Belongs to the MacroD-type family.

This is Macro domain-containing protein in gbd 3'region from Cupriavidus necator (Alcaligenes eutrophus).